The sequence spans 415 residues: Protein ROH1A (415 aa).

Positions 184–219 are disordered; that stretch reads VSGGGGGGGGGNKTTERSWSFGRRSGGSSAASKGGA. The span at 185-195 shows a compositional bias: gly residues; that stretch reads SGGGGGGGGGN. Residues 200-219 are compositionally biased toward low complexity; sequence RSWSFGRRSGGSSAASKGGA. A helical membrane pass occupies residues 263–283; sequence MFIMSTVMVFVMWVLTAAVPC.

Belongs to the ROH1 family. Interacts with EXO70A1 and EXO70C1. Binds to EXO70C2. Mainly expressed in cells expanding in a polar manner such as pollen and root hairs.

The protein localises to the membrane. The protein resides in the cytoplasm. It localises to the cytosol. In terms of biological role, required for seed coat mucilage deposition. The polypeptide is Protein ROH1A (Arabidopsis thaliana (Mouse-ear cress)).